Reading from the N-terminus, the 376-residue chain is Metal tolerance protein 6 (376 aa).

The tract at residues 1-28 (MAAAAGVAAGTGRGSGEGEELLPNAVEG) is disordered. Residues 1 to 123 (MAAAAGVAAG…CEKVARSEAL (123 aa)) are Cytoplasmic-facing. Residues 124–144 (AIRLSNIANMVLFAAKVYASI) form a helical membrane-spanning segment. The Vacuolar segment spans residues 145–149 (RSGSL). Residues 150–170 (AIIASTLDSLLDLLSGFILWF) form a helical membrane-spanning segment. Residues 171–191 (TAFSKKTSNPYRYPIGKRRMQ) lie on the Cytoplasmic side of the membrane. A helical transmembrane segment spans residues 192–212 (PLGILVFASVMATLGLQIILE). At 213 to 231 (STRSLFYDGDTFRLTKEQE) the chain is on the vacuolar side. The chain crosses the membrane as a helical span at residues 232–252 (KWVVDIMLSVTSVKLLLVVYC). The Cytoplasmic portion of the chain corresponds to 253–376 (RSFTNEILAI…PEHARSHDTL (124 aa)).

Belongs to the cation diffusion facilitator (CDF) transporter (TC 2.A.4) family. SLC30A subfamily.

It localises to the vacuole membrane. Functionally, involved in sequestration of excess metal in the cytoplasm into vacuoles to maintain metal homeostasis. The sequence is that of Metal tolerance protein 6 (MTP6) from Oryza sativa subsp. japonica (Rice).